A 264-amino-acid chain; its full sequence is Thymidylate synthase (264 aa).

DUMP is bound by residues R21 and 126 to 127; that span reads RR. Residue C146 is the Nucleophile of the active site. DUMP contacts are provided by residues 166 to 169, N177, and 207 to 209; these read RSAD and HLY. D169 serves as a coordination point for (6R)-5,10-methylene-5,6,7,8-tetrahydrofolate. A263 lines the (6R)-5,10-methylene-5,6,7,8-tetrahydrofolate pocket.

It belongs to the thymidylate synthase family. Bacterial-type ThyA subfamily. In terms of assembly, homodimer.

Its subcellular location is the cytoplasm. The enzyme catalyses dUMP + (6R)-5,10-methylene-5,6,7,8-tetrahydrofolate = 7,8-dihydrofolate + dTMP. Its pathway is pyrimidine metabolism; dTTP biosynthesis. Functionally, catalyzes the reductive methylation of 2'-deoxyuridine-5'-monophosphate (dUMP) to 2'-deoxythymidine-5'-monophosphate (dTMP) while utilizing 5,10-methylenetetrahydrofolate (mTHF) as the methyl donor and reductant in the reaction, yielding dihydrofolate (DHF) as a by-product. This enzymatic reaction provides an intracellular de novo source of dTMP, an essential precursor for DNA biosynthesis. The protein is Thymidylate synthase of Rhodopseudomonas palustris (strain ATCC BAA-98 / CGA009).